A 289-amino-acid chain; its full sequence is Palmitoyl-protein thioesterase 3 (289 aa).

Positions 1-20 (MRILSSLILLIALAIALVSA) are cleaved as a signal peptide. Ser97 is an active-site residue. N-linked (GlcNAc...) asparagine glycans are attached at residues Asn189 and Asn195. Catalysis depends on residues Asp210 and His266. Asn281 carries an N-linked (GlcNAc...) asparagine glycan.

Belongs to the palmitoyl-protein thioesterase family.

It is found in the lysosome. The enzyme catalyses S-hexadecanoyl-L-cysteinyl-[protein] + H2O = L-cysteinyl-[protein] + hexadecanoate + H(+). In terms of biological role, removes thioester-linked fatty acyl groups such as palmitate from modified cysteine residues in proteins or peptides during lysosomal degradation. This Dictyostelium discoideum (Social amoeba) protein is Palmitoyl-protein thioesterase 3 (ppt3).